Here is a 141-residue protein sequence, read N- to C-terminus: Large ribosomal subunit protein uL11A (141 aa).

The protein belongs to the universal ribosomal protein uL11 family. Part of the ribosomal stalk of the 50S ribosomal subunit. Interacts with L10 and the large rRNA to form the base of the stalk. L10 forms an elongated spine to which L12 dimers bind in a sequential fashion forming a multimeric L10(L12)X complex. One or more lysine residues are methylated.

Forms part of the ribosomal stalk which helps the ribosome interact with GTP-bound translation factors. This is Large ribosomal subunit protein uL11A from Halalkalibacterium halodurans (strain ATCC BAA-125 / DSM 18197 / FERM 7344 / JCM 9153 / C-125) (Bacillus halodurans).